The sequence spans 97 residues: Large ribosomal subunit protein bL28 (97 aa).

The protein belongs to the bacterial ribosomal protein bL28 family.

The polypeptide is Large ribosomal subunit protein bL28 (Rickettsia felis (strain ATCC VR-1525 / URRWXCal2) (Rickettsia azadi)).